Consider the following 114-residue polypeptide: Hydrogenase maturation factor HypA (114 aa).

His-2 contributes to the Ni(2+) binding site. Cys-70, Cys-73, Cys-86, and Cys-89 together coordinate Zn(2+).

This sequence belongs to the HypA/HybF family.

Its function is as follows. Involved in the maturation of [NiFe] hydrogenases. Required for nickel insertion into the metal center of the hydrogenase. The sequence is that of Hydrogenase maturation factor HypA from Rippkaea orientalis (strain PCC 8801 / RF-1) (Cyanothece sp. (strain PCC 8801)).